A 283-amino-acid chain; its full sequence is Pyridoxine/pyridoxal/pyridoxamine kinase (283 aa).

Serine 23 and histidine 59 together coordinate substrate. Aspartate 125 is a binding site for ATP. Residue tyrosine 136 coordinates Mg(2+). ATP-binding positions include threonine 157, glutamate 162, threonine 195, 222–225, and threonine 232; that span reads HAHV. Mg(2+) is bound at residue glutamate 162. Aspartate 234 provides a ligand contact to substrate.

The protein belongs to the pyridoxine kinase family. PdxK subfamily. As to quaternary structure, homodimer. Mg(2+) serves as cofactor.

It catalyses the reaction pyridoxal + ATP = pyridoxal 5'-phosphate + ADP + H(+). The enzyme catalyses pyridoxine + ATP = pyridoxine 5'-phosphate + ADP + H(+). It carries out the reaction pyridoxamine + ATP = pyridoxamine 5'-phosphate + ADP + H(+). It functions in the pathway cofactor metabolism; pyridoxal 5'-phosphate salvage; pyridoxal 5'-phosphate from pyridoxal: step 1/1. It participates in cofactor metabolism; pyridoxal 5'-phosphate salvage; pyridoxine 5'-phosphate from pyridoxine: step 1/1. The protein operates within cofactor metabolism; pyridoxal 5'-phosphate salvage; pyridoxamine 5'-phosphate from pyridoxamine: step 1/1. B6-vitamer kinase involved in the salvage pathway of pyridoxal 5'-phosphate (PLP). Catalyzes the phosphorylation of pyridoxine (PN), pyridoxal (PL), and pyridoxamine (PM), forming their respective 5'-phosphorylated esters, i.e. PNP, PLP and PMP. The sequence is that of Pyridoxine/pyridoxal/pyridoxamine kinase from Bordetella pertussis (strain Tohama I / ATCC BAA-589 / NCTC 13251).